Reading from the N-terminus, the 150-residue chain is CCAAT/enhancer-binding protein gamma (150 aa).

Lysine 3 is covalently cross-linked (Glycyl lysine isopeptide (Lys-Gly) (interchain with G-Cter in SUMO2)). The tract at residues 27 to 94 (GLQQVPQLVP…QKAQDTLQRV (68 aa)) is disordered. Residues 28 to 37 (LQQVPQLVPA) are compositionally biased toward low complexity. Over residues 56–72 (SPMDRNSDEYRQRRERN) the composition is skewed to basic and acidic residues. In terms of domain architecture, bZIP spans 62-125 (SDEYRQRRER…SVLKDLFLEH (64 aa)). The basic motif stretch occupies residues 66–93 (RQRRERNNMAVKKSRLKSKQKAQDTLQR). The interval 97–118 (LKEENERLEAKIKLLTKELSVL) is leucine-zipper.

Belongs to the bZIP family. C/EBP subfamily. In terms of assembly, binds DNA as a dimer and can form stable heterodimers with CEBPA and CEBPB. Interacts with ZNF638; this interaction increases transcriptional activation.

Its subcellular location is the nucleus. In terms of biological role, transcription factor that binds to the promoter and the enhancer regions of target genes. Binds to the enhancer element PRE-I (positive regulatory element-I) of the IL-4 gene. Binds to the promoter and the enhancer of the immunoglobulin heavy chain. Binds to GPE1, a cis-acting element in the G-CSF gene promoter. This chain is CCAAT/enhancer-binding protein gamma (CEBPG), found in Homo sapiens (Human).